Here is a 188-residue protein sequence, read N- to C-terminus: ATP synthase subunit delta (188 aa).

It belongs to the ATPase delta chain family. F-type ATPases have 2 components, F(1) - the catalytic core - and F(0) - the membrane proton channel. F(1) has five subunits: alpha(3), beta(3), gamma(1), delta(1), epsilon(1). F(0) has three main subunits: a(1), b(2) and c(10-14). The alpha and beta chains form an alternating ring which encloses part of the gamma chain. F(1) is attached to F(0) by a central stalk formed by the gamma and epsilon chains, while a peripheral stalk is formed by the delta and b chains.

The protein resides in the cell inner membrane. Functionally, f(1)F(0) ATP synthase produces ATP from ADP in the presence of a proton or sodium gradient. F-type ATPases consist of two structural domains, F(1) containing the extramembraneous catalytic core and F(0) containing the membrane proton channel, linked together by a central stalk and a peripheral stalk. During catalysis, ATP synthesis in the catalytic domain of F(1) is coupled via a rotary mechanism of the central stalk subunits to proton translocation. In terms of biological role, this protein is part of the stalk that links CF(0) to CF(1). It either transmits conformational changes from CF(0) to CF(1) or is implicated in proton conduction. The chain is ATP synthase subunit delta from Agrobacterium fabrum (strain C58 / ATCC 33970) (Agrobacterium tumefaciens (strain C58)).